A 466-amino-acid chain; its full sequence is MSIASVASVFKGDFAVGSQVTVRGWVRTRRDSKAGISFLAVYDGSCFDPIQGVVPNSLDNYNDEILRLTAGCSVVMTGELVESPGKGQAFEMQVTKVEVTGWVEDPDTYPMAAKRHSIEHLRELAHLRPRTNIIGAVARVRNCLSHAIHNFYNEEGFIWVSTPLITASDCEGAGEMFRVSTLDLENLPRTDDGKVDFSEDFFGKESFLTVSGQLNGETYACALSKIYTFGPTFRAENSNTSRHLAEFWMVEPEVAFADLNDVAGLAERMLKYCFRAVLNERRDDLEFFAQRVDKTVIERLESFVNSDFAQVDYTDAIEILKSCGKKFEFDVEWGIDLQSEHERYLAEEHFKAPVVVKNYPKDIKAFYMRLNEDGKTVAAMDVLAPGIGEIIGGAQREERLDVLDTRLDEMGLSKEDYWWYRDLRRYGTVPHSGFGLGFERLVSYVTGVSNIRDVIPFPRAPKSANF.

The protein belongs to the class-II aminoacyl-tRNA synthetase family. Homodimer.

Its subcellular location is the cytoplasm. The catalysed reaction is tRNA(Asn) + L-asparagine + ATP = L-asparaginyl-tRNA(Asn) + AMP + diphosphate + H(+). This is Asparagine--tRNA ligase from Shewanella loihica (strain ATCC BAA-1088 / PV-4).